The sequence spans 630 residues: Beta-phellandrene synthase, chloroplastic (630 aa).

A chloroplast-targeting transit peptide spans 1–48; it reads MALVSSAPKSCLHKSLIRSTHHELKPLRRTIPTLGMCRRGKSFTPSVS. Residues Asp381, Asp385, and Asp533 each coordinate Mg(2+). A DDXXD motif motif is present at residues 381-385; it reads DDIYD.

Belongs to the terpene synthase family. Tpsd subfamily. Mg(2+) serves as cofactor. Requires Mn(2+) as cofactor. K(+) is required as a cofactor.

It is found in the plastid. Its subcellular location is the chloroplast. The catalysed reaction is (2E)-geranyl diphosphate = (-)-beta-phellandrene + diphosphate. The protein operates within terpene metabolism; oleoresin biosynthesis. Converts geranyl diphosphate to four products with (-)-(4S)-beta-phellandrene (52%) as the major olefin, and lesser amounts of (-)-(1S,5S)-beta-pinene (34%), (-)-1S,5S-alpha-pinene (8.5%), and (-)-(4S)-limonene (6%). Involved in defensive oleoresin formation in conifers in response to insect attack or other injury. Involved in monoterpene (C10) olefins biosynthesis. In Abies grandis (Grand fir), this protein is Beta-phellandrene synthase, chloroplastic (ag8).